The primary structure comprises 117 residues: Ig heavy chain V region 102 (117 aa).

An N-terminal signal peptide occupies residues 1 to 19 (MGWSCIILFLVATATGVHS). The framework-1 stretch occupies residues 20–49 (HVQLQQPGAELVKPGASVKVSCKASGYTFT). Cysteine 41 and cysteine 115 form a disulfide bridge. Residues 50–54 (SYWMH) are complementarity-determining-1. The framework-2 stretch occupies residues 55–68 (WVKQRPGQGLEWIG). Positions 69-85 (RIHPSDSDTNYNQKFKG) are complementarity-determining-2. The interval 86–117 (KATLTVDKSSSTAYMQLSSLTSEDSAVYYCAI) is framework-3.

The polypeptide is Ig heavy chain V region 102 (Mus musculus (Mouse)).